A 154-amino-acid chain; its full sequence is MAVHKEVNFVAYLLIVLGLLVLVSAMEHVDAKACTLECGNLGFGICPRSEGSPENRICTNCCAGYKGCNYYSANGAFICEGESDPKKPKACPRNCDPHIAYSKCPRSEGKSLIYPTGCTTCCTGYKGCYYFGKNGKFVCEGESDEPKANMYPAM.

Residues 1–25 (MAVHKEVNFVAYLLIVLGLLVLVSA) form the signal peptide. 2 consecutive repeat copies span residues 31 to 87 (AKAC…DPKK) and 88 to 147 (PKAC…DEPK). 8 disulfide bridges follow: Cys34–Cys122, Cys38–Cys118, Cys46–Cys128, Cys58–Cys95, Cys61–Cys79, Cys62–Cys91, Cys68–Cys104, and Cys121–Cys139.

Belongs to the protease inhibitor I20 (potato type II proteinase inhibitor) family.

The polypeptide is Proteinase inhibitor type-2 P303.51 (Solanum tuberosum (Potato)).